A 170-amino-acid polypeptide reads, in one-letter code: Type IV pilus assembly protein C (170 aa).

Positions 1–23 (MKSKLPLILINLSLISSPLGANA) are cleaved as a signal peptide. Positions 87 to 107 (KTVSKPAKSNTPPQQAPVNNS) are disordered. The segment covering 93 to 107 (AKSNTPPQQAPVNNS) has biased composition (polar residues). The stretch at 109-166 (RSILEAELSNERKALTEAQKMLSQARLAKGGNINHQKINALQSNVLDRQQNIQALQRE) forms a coiled coil.

It localises to the periplasm. Functionally, required for stabilizing type IV pilus (T4p) in extended, nonretracted conformation on the bacterial cell surface. This chain is Type IV pilus assembly protein C, found in Neisseria gonorrhoeae (strain ATCC 700825 / FA 1090).